Reading from the N-terminus, the 449-residue chain is Phosphoglucosamine mutase (449 aa).

The Phosphoserine intermediate role is filled by Ser101. The Mg(2+) site is built by Ser101, Asp240, Asp242, and Asp244. Phosphoserine is present on Ser101.

It belongs to the phosphohexose mutase family. The cofactor is Mg(2+). In terms of processing, activated by phosphorylation.

The catalysed reaction is alpha-D-glucosamine 1-phosphate = D-glucosamine 6-phosphate. Its function is as follows. Catalyzes the conversion of glucosamine-6-phosphate to glucosamine-1-phosphate. The chain is Phosphoglucosamine mutase from Streptococcus mutans serotype c (strain ATCC 700610 / UA159).